Reading from the N-terminus, the 544-residue chain is Chaperonin GroEL (544 aa).

ATP-binding positions include 29 to 32 (TLGP), K50, 86 to 90 (DGTTT), G414, and D495.

Belongs to the chaperonin (HSP60) family. As to quaternary structure, forms a cylinder of 14 subunits composed of two heptameric rings stacked back-to-back. Interacts with the co-chaperonin GroES.

It localises to the cytoplasm. The catalysed reaction is ATP + H2O + a folded polypeptide = ADP + phosphate + an unfolded polypeptide.. Its function is as follows. Together with its co-chaperonin GroES, plays an essential role in assisting protein folding. The GroEL-GroES system forms a nano-cage that allows encapsulation of the non-native substrate proteins and provides a physical environment optimized to promote and accelerate protein folding. This chain is Chaperonin GroEL, found in Treponema pallidum subsp. pallidum (strain SS14).